The sequence spans 134 residues: Protein dpy-30 homolog (134 aa).

The segment at 1–81 (MEAKTDAPIS…ETNNMPTRQY (81 aa)) is disordered. The span at 31-68 (AQANPTAAPGAPPSGAIAVGQSTNPVAQQQQQPAVAKK) shows a compositional bias: low complexity. The span at 71 to 81 (SETNNMPTRQY) shows a compositional bias: polar residues.

The protein belongs to the dpy-30 family. In terms of assembly, core component of several methyltransferase-containing complexes. Component of the SET1 complex, composed at least of the catalytic subunit Set1, wds/WDR5, Wdr82, Rbbp5, ash2, Cfp1/CXXC1, hcf and Dpy-30L1. Component of the MLL3/4 complex composed at least of the catalytic subunit trr, ash2, Rbbp5, Dpy-30L1, wds, hcf, ptip, Pa1, Utx, Lpt and Ncoa6. Expressed in larval brain, gonad, imaginal disk and salivary gland and in adult brain, testis, ovary and salivary gland.

It is found in the nucleus. In terms of biological role, component of the SET1 complex that specifically di- and trimethylates 'Lys-4' of histone H3 and of the MLL3/4 complex which also methylates histone H3 'Lys-4'. Inhibits MTF-1 transcription factor activity. The protein is Protein dpy-30 homolog of Drosophila melanogaster (Fruit fly).